The following is a 972-amino-acid chain: Isoleucine--tRNA ligase (972 aa).

A 'HIGH' region motif is present at residues 63 to 73; sequence PYANGNIHIGH. Residue E603 coordinates L-isoleucyl-5'-AMP. A 'KMSKS' region motif is present at residues 644-648; sequence KMSKS. K647 provides a ligand contact to ATP.

The protein belongs to the class-I aminoacyl-tRNA synthetase family. IleS type 1 subfamily. As to quaternary structure, monomer.

It localises to the cytoplasm. The enzyme catalyses tRNA(Ile) + L-isoleucine + ATP = L-isoleucyl-tRNA(Ile) + AMP + diphosphate. Catalyzes the attachment of isoleucine to tRNA(Ile). As IleRS can inadvertently accommodate and process structurally similar amino acids such as valine, to avoid such errors it has two additional distinct tRNA(Ile)-dependent editing activities. One activity is designated as 'pretransfer' editing and involves the hydrolysis of activated Val-AMP. The other activity is designated 'posttransfer' editing and involves deacylation of mischarged Val-tRNA(Ile). This is Isoleucine--tRNA ligase from Brucella abortus (strain 2308).